Here is a 437-residue protein sequence, read N- to C-terminus: Cobyrinate a,c-diamide synthase (437 aa).

Residues 243–433 (IAAIAYDSAF…SHFHFSSARG (191 aa)) form the GATase cobBQ-type domain. Cys-324 acts as the Nucleophile in catalysis.

This sequence belongs to the CobB/CbiA family. Mg(2+) is required as a cofactor.

It catalyses the reaction cob(II)yrinate + 2 L-glutamine + 2 ATP + 2 H2O = cob(II)yrinate a,c diamide + 2 L-glutamate + 2 ADP + 2 phosphate + 2 H(+). The protein operates within cofactor biosynthesis; adenosylcobalamin biosynthesis; cob(II)yrinate a,c-diamide from sirohydrochlorin (anaerobic route): step 10/10. Functionally, catalyzes the ATP-dependent amidation of the two carboxylate groups at positions a and c of cobyrinate, using either L-glutamine or ammonia as the nitrogen source. In Sulfurisphaera tokodaii (strain DSM 16993 / JCM 10545 / NBRC 100140 / 7) (Sulfolobus tokodaii), this protein is Cobyrinate a,c-diamide synthase.